Here is a 133-residue protein sequence, read N- to C-terminus: Fluoride-specific ion channel FluC 3 (133 aa).

3 consecutive transmembrane segments (helical) span residues 7 to 27 (ILVLVGGFIGGVMRFFLSGYV), 37 to 57 (WGTFVVNVSGAFVIGTAAGLG), and 60 to 80 (LGAIFSTTIFHEFIMVGLLGG). Residues Gly79 and Thr82 each contribute to the Na(+) site. Residues 107–127 (IVASALLCVLAVAAGYGGIMW) form a helical membrane-spanning segment.

The protein belongs to the fluoride channel Fluc/FEX (TC 1.A.43) family.

It localises to the cell inner membrane. The enzyme catalyses fluoride(in) = fluoride(out). Na(+) is not transported, but it plays an essential structural role and its presence is essential for fluoride channel function. Its function is as follows. Fluoride-specific ion channel. Important for reducing fluoride concentration in the cell, thus reducing its toxicity. In Brucella suis biovar 1 (strain 1330), this protein is Fluoride-specific ion channel FluC 3.